We begin with the raw amino-acid sequence, 106 residues long: Thiosulfate sulfurtransferase GlpE (106 aa).

The region spanning 17–105 (EQNEARLVDI…SYRAELPVIA (89 aa)) is the Rhodanese domain. The Cysteine persulfide intermediate role is filled by C65.

The protein belongs to the GlpE family.

It is found in the cytoplasm. The catalysed reaction is thiosulfate + hydrogen cyanide = thiocyanate + sulfite + 2 H(+). It catalyses the reaction thiosulfate + [thioredoxin]-dithiol = [thioredoxin]-disulfide + hydrogen sulfide + sulfite + 2 H(+). Transferase that catalyzes the transfer of sulfur from thiosulfate to thiophilic acceptors such as cyanide or dithiols. May function in a CysM-independent thiosulfate assimilation pathway by catalyzing the conversion of thiosulfate to sulfite, which can then be used for L-cysteine biosynthesis. The chain is Thiosulfate sulfurtransferase GlpE from Vibrio atlanticus (strain LGP32) (Vibrio splendidus (strain Mel32)).